Reading from the N-terminus, the 200-residue chain is Transcription factor FapR (200 aa).

The protein belongs to the FapR family.

Functionally, transcriptional factor involved in regulation of membrane lipid biosynthesis by repressing genes involved in fatty acid and phospholipid metabolism. The protein is Transcription factor FapR of Caldanaerobacter subterraneus subsp. tengcongensis (strain DSM 15242 / JCM 11007 / NBRC 100824 / MB4) (Thermoanaerobacter tengcongensis).